The chain runs to 61 residues: Small ribosomal subunit protein uS14 (61 aa).

Zn(2+)-binding residues include Cys-24, Cys-27, Cys-40, and Cys-43.

The protein belongs to the universal ribosomal protein uS14 family. Zinc-binding uS14 subfamily. Part of the 30S ribosomal subunit. Contacts proteins S3 and S10. Zn(2+) is required as a cofactor.

Binds 16S rRNA, required for the assembly of 30S particles and may also be responsible for determining the conformation of the 16S rRNA at the A site. The sequence is that of Small ribosomal subunit protein uS14 from Acidothermus cellulolyticus (strain ATCC 43068 / DSM 8971 / 11B).